We begin with the raw amino-acid sequence, 449 residues long: UDP-N-acetylmuramoylalanine--D-glutamate ligase (449 aa).

An ATP-binding site is contributed by 119 to 125 (GSNGKTT).

This sequence belongs to the MurCDEF family.

The protein resides in the cytoplasm. The enzyme catalyses UDP-N-acetyl-alpha-D-muramoyl-L-alanine + D-glutamate + ATP = UDP-N-acetyl-alpha-D-muramoyl-L-alanyl-D-glutamate + ADP + phosphate + H(+). The protein operates within cell wall biogenesis; peptidoglycan biosynthesis. Its function is as follows. Cell wall formation. Catalyzes the addition of glutamate to the nucleotide precursor UDP-N-acetylmuramoyl-L-alanine (UMA). This is UDP-N-acetylmuramoylalanine--D-glutamate ligase from Streptococcus suis (strain 98HAH33).